We begin with the raw amino-acid sequence, 247 residues long: Cytochrome c oxidase subunit 2 (247 aa).

An N-terminal signal peptide occupies residues 1 to 11 (MFYLLNSIIMN). Residues 12 to 38 (DVPTPYGMYFQDSATPNQEGILELHDN) lie on the Mitochondrial intermembrane side of the membrane. A helical transmembrane segment spans residues 39 to 59 (IMFYLFIILGLVSWLLFTIVR). The Mitochondrial matrix portion of the chain corresponds to 60–78 (TYSKNPIAYKYIKHGQTIE). Residues 79–101 (IIWTIFPAVILLIIAFPSFILLY) traverse the membrane as a helical segment. Residues 102–247 (LCDEVISPAM…PAFLEWLNEQ (146 aa)) are Mitochondrial intermembrane-facing. Residues histidine 182, cysteine 217, glutamate 219, cysteine 221, histidine 225, and methionine 228 each contribute to the Cu cation site. Position 219 (glutamate 219) interacts with Mg(2+).

The protein belongs to the cytochrome c oxidase subunit 2 family. As to quaternary structure, component of the cytochrome c oxidase (complex IV, CIV), a multisubunit enzyme composed of a catalytic core of 3 subunits and several supernumerary subunits. The complex exists as a monomer or a dimer and forms supercomplexes (SCs) in the inner mitochondrial membrane with ubiquinol-cytochrome c oxidoreductase (cytochrome b-c1 complex, complex III, CIII). It depends on Cu cation as a cofactor. Post-translationally, the signal sequence of COX2 is processed by IMP1.

The protein localises to the mitochondrion inner membrane. It catalyses the reaction 4 Fe(II)-[cytochrome c] + O2 + 8 H(+)(in) = 4 Fe(III)-[cytochrome c] + 2 H2O + 4 H(+)(out). Functionally, component of the cytochrome c oxidase, the last enzyme in the mitochondrial electron transport chain which drives oxidative phosphorylation. The respiratory chain contains 3 multisubunit complexes succinate dehydrogenase (complex II, CII), ubiquinol-cytochrome c oxidoreductase (cytochrome b-c1 complex, complex III, CIII) and cytochrome c oxidase (complex IV, CIV), that cooperate to transfer electrons derived from NADH and succinate to molecular oxygen, creating an electrochemical gradient over the inner membrane that drives transmembrane transport and the ATP synthase. Cytochrome c oxidase is the component of the respiratory chain that catalyzes the reduction of oxygen to water. Electrons originating from reduced cytochrome c in the intermembrane space (IMS) are transferred via the dinuclear copper A center (CU(A)) of subunit 2 and heme A of subunit 1 to the active site in subunit 1, a binuclear center (BNC) formed by heme A3 and copper B (CU(B)). The BNC reduces molecular oxygen to 2 water molecules using 4 electrons from cytochrome c in the IMS and 4 protons from the mitochondrial matrix. The protein is Cytochrome c oxidase subunit 2 (COX2) of Kluyveromyces lactis (strain ATCC 8585 / CBS 2359 / DSM 70799 / NBRC 1267 / NRRL Y-1140 / WM37) (Yeast).